The chain runs to 470 residues: UDP-N-acetylmuramoylalanine--D-glutamate ligase (470 aa).

124–130 (GTNGKTT) is an ATP binding site.

The protein belongs to the MurCDEF family.

Its subcellular location is the cytoplasm. It carries out the reaction UDP-N-acetyl-alpha-D-muramoyl-L-alanine + D-glutamate + ATP = UDP-N-acetyl-alpha-D-muramoyl-L-alanyl-D-glutamate + ADP + phosphate + H(+). The protein operates within cell wall biogenesis; peptidoglycan biosynthesis. Cell wall formation. Catalyzes the addition of glutamate to the nucleotide precursor UDP-N-acetylmuramoyl-L-alanine (UMA). The polypeptide is UDP-N-acetylmuramoylalanine--D-glutamate ligase (Prochlorococcus marinus (strain SARG / CCMP1375 / SS120)).